A 269-amino-acid chain; its full sequence is UPF0162 protein BUsg_167 (269 aa).

Belongs to the UPF0162 family.

In Buchnera aphidicola subsp. Schizaphis graminum (strain Sg), this protein is UPF0162 protein BUsg_167.